The primary structure comprises 125 residues: Secreted RxLR effector protein RXLR-C13 (125 aa).

A signal peptide spans 1–23 (MVNSLTFTLVVVCLVRSCDGVAA). The RxLR-dEER signature appears at 43 to 73 (RVLQETATANDDVKKLSTSTKVDSKLNQEIK). N-linked (GlcNAc...) asparagine glycosylation occurs at Asn-85. A helical transmembrane segment spans residues 106-123 (FFILATILLFPIAAYMVA).

This sequence belongs to the RxLR effector family.

It is found in the secreted. Its subcellular location is the host endoplasmic reticulum membrane. In terms of biological role, secreted effector that does not suppress pattern-triggered immunity (PTI) in plant host. The polypeptide is Secreted RxLR effector protein RXLR-C13 (Plasmopara halstedii (Downy mildew of sunflower)).